A 335-amino-acid chain; its full sequence is MSFAGLLDFARKDVDLPQNSPNELLKDLHANFINQYEKNKNSYHYIMAEHLRVSGIYWCVNAMDLSKQLERMSTEEIVNYVLGCRNTDGGYGPAPGHDSHLLHTLCAVQTLIIFNSIEKADADTISEYVKGLQQEDGSFCGDLSGEVDTRFTLCSLATCHLLGRLSTLNIDSAVRFLMRCYNTDGGFGTRPGSESHSGQIYCCVGALAIAGRLDEIDRDRTAEWLAFRQCDSGGLNGRPEKLPDVCYSWWVLASLAILGRLNFIDSDAMKKFIYACQDDETGGFADRPGDCADPFHTVFGIAALSLFGDDTLESVDPIFCMTKRCLGDKQVEMYY.

5 PFTB repeats span residues 74–115 (TEEI…IIFN), 122–163 (ADTI…HLLG), 170–211 (IDSA…AIAG), 218–259 (RDRT…AILG), and 266–312 (SDAM…DDTL). Geranylgeranyl diphosphate contacts are provided by residues 196–198 (HSG) and 238–250 (RPEKLPDVCYSWW). Zn(2+)-binding residues include D244, C246, and H296.

Belongs to the protein prenyltransferase subunit beta family. As to quaternary structure, heterodimer of an alpha and a beta subunit. It depends on Zn(2+) as a cofactor.

It carries out the reaction geranylgeranyl diphosphate + L-cysteinyl-[protein] = S-geranylgeranyl-L-cysteinyl-[protein] + diphosphate. Its function is as follows. Catalyzes the transfer of a geranyl-geranyl moiety from geranyl-geranyl pyrophosphate to both cysteines in Rab proteins with an -XXCC, -XCXC and -CCXX C-terminal. In Caenorhabditis elegans, this protein is Probable geranylgeranyl transferase type-2 subunit beta (ggtb-1).